Consider the following 36-residue polypeptide: Phospholipase A2 hemilipin-2 (36 aa).

Belongs to the phospholipase A2 family. Group III subfamily. Heterodimer composed of a small subunit and a large subunit; disulfid-linked. It depends on Ca(2+) as a cofactor. In terms of tissue distribution, expressed by the venom gland.

It is found in the secreted. The enzyme catalyses a 1,2-diacyl-sn-glycero-3-phosphocholine + H2O = a 1-acyl-sn-glycero-3-phosphocholine + a fatty acid + H(+). In terms of biological role, scorpion venom phospholipase A2 (PLA2) that impacts angiogenesis in vitro and in vivo without showing any cytotoxic or apoptotic signs. The antiangiogenic effect is independent from the catalytic activity and seems to be held by its small subunit. PLA2 catalyzes the calcium-dependent hydrolysis of the 2-acyl groups in 3-sn-phosphoglycerides. The polypeptide is Phospholipase A2 hemilipin-2 (Hemiscorpius lepturus (Scorpion)).